Reading from the N-terminus, the 226-residue chain is PKHD-type hydroxylase LHK_00496 (226 aa).

In terms of domain architecture, Fe2OG dioxygenase spans 78 to 178 (RFFPPLFNRY…RVASFMWIQS (101 aa)). His96, Asp98, and His159 together coordinate Fe cation. Arg169 contributes to the 2-oxoglutarate binding site.

Fe(2+) is required as a cofactor. L-ascorbate serves as cofactor.

The chain is PKHD-type hydroxylase LHK_00496 from Laribacter hongkongensis (strain HLHK9).